A 917-amino-acid polypeptide reads, in one-letter code: MATSVDNRHYPTMNGVAHAFKPPLVPSPRSFDRHRHQNQTLDVILTETKIVKETEVITTVVDSYDDSSSDDEDESHNRNVPYYKELVKKSNSDLEPSILDPRDESTADSWIQRNSSMLRLTGKHPFNAEAPLPRLMHHGFITPVPLHYVRNHGAVPKANWSDWSIEITGLVKRPAKFTMEELISEFPSREFPVTLVCAGNRRKEQNMVKQTIGFNWGSAGVSTSLWKGIPLSEILRRCGIYSRRGGALNVCFEGAEDLPGGGGSKYGTSIKKEMAMDPARDIILAYMQNGELLTPDHGFPVRVIVPGFIGGRMVKWLKRIIVTPQESDSYYHYKDNRVLPSLVDAELANSEAWWYKPEYIINELNINSVITTPGHAEILPINAFTTQKPYTLKGYAYSGGGKKVTRVEVTLDGGDTWSVCELDHQEKPNKYGKFWCWCFWSLDVEVLDLLSAKDVAVRAWDESFNTQPDKLIWNLMGMMNNCWFRIRTNVCKPHRGEIGIVFEHPTRPGNQSGGWMAKERQLEISSESNNTLKKSVSSPFMNTASKMYSISEVRKHNTADSAWIIVHGHIYDCTRFLKDHPGGTDSILINAGTDCTEEFEAIHSDKAKKLLEDYRIGELITTGYDSSPNVSVHGASNFGPLLAPIKELTPQKNIALVNPREKIPVRLIEKTSISHDVRKFRFALPSEDQQLGLPVGKHVFVCANINDKLCLRAYTPTSAIDAVGHIDLVVKVYFKDVHPRFPNGGLMSQHLDSLPIGSMIDIKGPLGHIEYKGKGNFLVSGKPKFAKKLAMLAGGTGITPIYQIIQSILSDPEDETEMYVVYANRTEDDILVREELEGWASKHKERLKIWYVVEIAKEGWSYSTGFITEAVLREHIPEGLEGESLALACGPPPMIQFALQPNLEKMGYNVKEDLLIF.

Residues 62-81 (DSYDDSSSDDEDESHNRNVP) are disordered. Acidic residues predominate over residues 63–74 (SYDDSSSDDEDE). Cys-197 is a Mo-molybdopterin binding site. In terms of domain architecture, Cytochrome b5 heme-binding spans 545–620 (SKMYSISEVR…LEDYRIGELI (76 aa)). Heme is bound by residues His-580 and His-603. The FAD-binding FR-type domain maps to 660–772 (REKIPVRLIE…KGPLGHIEYK (113 aa)). Residues 712–715 (RAYT), 729–733 (VVKVY), Phe-734, Phe-741, 746–748 (LMS), and Thr-799 each bind FAD.

The protein belongs to the nitrate reductase family. As to quaternary structure, homodimer. Requires FAD as cofactor. It depends on heme as a cofactor. Mo-molybdopterin is required as a cofactor. As to expression, root, leaf, and shoot.

The enzyme catalyses nitrite + NAD(+) + H2O = nitrate + NADH + H(+). Its function is as follows. Nitrate reductase is a key enzyme involved in the first step of nitrate assimilation in plants, fungi and bacteria. The sequence is that of Nitrate reductase [NADH] 1 (NIA1) from Arabidopsis thaliana (Mouse-ear cress).